The sequence spans 642 residues: Threonine--tRNA ligase (642 aa).

Residues 1 to 61 (MPAITLPDGS…AADAQVVFVT (61 aa)) form the TGS domain. The interval 243-536 (DHRRLGKEMD…LIEQYAGRFP (294 aa)) is catalytic. Zn(2+) contacts are provided by Cys336, His387, and His513.

Belongs to the class-II aminoacyl-tRNA synthetase family. In terms of assembly, homodimer. Zn(2+) serves as cofactor.

The protein localises to the cytoplasm. The enzyme catalyses tRNA(Thr) + L-threonine + ATP = L-threonyl-tRNA(Thr) + AMP + diphosphate + H(+). In terms of biological role, catalyzes the attachment of threonine to tRNA(Thr) in a two-step reaction: L-threonine is first activated by ATP to form Thr-AMP and then transferred to the acceptor end of tRNA(Thr). Also edits incorrectly charged L-seryl-tRNA(Thr). This is Threonine--tRNA ligase from Granulibacter bethesdensis (strain ATCC BAA-1260 / CGDNIH1).